Reading from the N-terminus, the 280-residue chain is Large ribosomal subunit protein uL2 (280 aa).

Disordered stretches follow at residues 1 to 20 (MAIR…SVSM), 29 to 58 (PEKS…GGGH), and 225 to 280 (VMNP…NKKR). A compositionally biased stretch (basic residues) spans 45–58 (SHGHITTRHRGGGH). Basic and acidic residues predominate over residues 253–269 (KEGRTRRPKRYSDDMIV). Positions 270–280 (RRRRANKNKKR) are enriched in basic residues.

Belongs to the universal ribosomal protein uL2 family. In terms of assembly, part of the 50S ribosomal subunit. Forms a bridge to the 30S subunit in the 70S ribosome.

In terms of biological role, one of the primary rRNA binding proteins. Required for association of the 30S and 50S subunits to form the 70S ribosome, for tRNA binding and peptide bond formation. It has been suggested to have peptidyltransferase activity; this is somewhat controversial. Makes several contacts with the 16S rRNA in the 70S ribosome. This Corynebacterium efficiens (strain DSM 44549 / YS-314 / AJ 12310 / JCM 11189 / NBRC 100395) protein is Large ribosomal subunit protein uL2.